Reading from the N-terminus, the 458-residue chain is Monomethylamine methyltransferase MtmB3 (458 aa).

Residue pyrrolysine 202 is a non-standard amino acid, pyrrolysine.

It belongs to the monomethylamine methyltransferase family.

It carries out the reaction Co(I)-[methylamine-specific corrinoid protein] + methylamine + H(+) = methyl-Co(III)-[methylamine-specific corrinoid protein] + NH4(+). It functions in the pathway one-carbon metabolism; methanogenesis from methylamine. In terms of biological role, catalyzes the transfer of the methyl group from monomethylamine to the corrinoid cofactor of MtmC. This is Monomethylamine methyltransferase MtmB3 (mtmB3) from Methanosarcina barkeri (strain Fusaro / DSM 804).